Here is a 321-residue protein sequence, read N- to C-terminus: Phosphate metabolism protein 8 (321 aa).

Belongs to the SSM1 family.

In terms of biological role, may be involved in phosphate metabolism. The protein is Phosphate metabolism protein 8 (PHM8) of Saccharomyces cerevisiae (strain ATCC 204508 / S288c) (Baker's yeast).